The primary structure comprises 3961 residues: Replicase polyprotein 1ab (3961 aa).

The C4-type; atypical zinc finger occupies 8-28 (CTCTPNARVFVAEGQVYCTRC). Residues 69 to 180 (ECSPTGACWL…EDFCPFECAM (112 aa)) form the Peptidase C31 domain. Positions 69-182 (ECSPTGACWL…FCPFECAMAD (114 aa)) are PCP1-alpha. Residues cysteine 76 and histidine 146 each act as for Nsp1-alpha papain-like cysteine proteinase activity in the active site. The tract at residues 199–200 (VS) is important for host EIF2AK2 inhibition. Positions 263–382 (DTVPEGNCWW…IFRFGSHKWY (120 aa)) are PCP1-beta. Residues 263–383 (DTVPEGNCWW…FRFGSHKWYG (121 aa)) enclose the Peptidase C32 domain. Catalysis depends on for Nsp1-beta papain-like cysteine proteinase activity residues cysteine 270 and histidine 339. An OTU-like region spans residues 426–513 (LKLYSPPAEG…GEHWTVSVNP (88 aa)). The Peptidase C33 domain occupies 428–535 (LYSPPAEGNC…QGCCEHKGGL (108 aa)). Catalysis depends on for Nsp2 cysteine proteinase activity residues cysteine 437 and histidine 506. A compositionally biased stretch (pro residues) spans 810–819 (WTPPPPPPRV). Disordered stretches follow at residues 810–875 (WTPP…FPTP), 899–918 (TPLD…SRPM), and 1148–1191 (TGEL…PADT). 7 helical membrane-spanning segments follow: residues 1266–1286 (FCLF…LGVF), 1296–1316 (GVFG…SDPV), 1368–1388 (VWHF…GAYV), 1583–1603 (LVAA…GVYV), 1648–1668 (LTAL…LIFV), 1685–1705 (CILL…LCVF), and 1719–1739 (ILWL…LAVV). Residues 1266-1388 (FCLFLCYSYP…ADCILAGAYV (123 aa)) are HD1. The tract at residues 1583 to 1745 (LVAALHVACS…LAVVLLVSLW (163 aa)) is HD2. The Peptidase S32 domain occupies 1810 to 2013 (GAFRTQKPSL…ALLAAKPELE (204 aa)). Catalysis depends on charge relay system; for 3C-like serine proteinase activity residues histidine 1848, aspartate 1873, and serine 1927. Transmembrane regions (helical) follow at residues 2036–2056 (WTPL…AVLV), 2060–2080 (FSFG…VLMI), 2092–2112 (LSLG…LAVT), 2137–2157 (SPVP…LYLF), and 2162–2182 (LHYV…RYFA). Residues 2036-2157 (WTPLVAVGFF…HLLAIILYLF (122 aa)) form an HD3 region. The NiRAN domain occupies 2488–2651 (IIDKLQGLTK…LPYKLYPVRG (164 aa)). Residues 2890 to 3024 (GRCLEADLAS…YAESPSMPNY (135 aa)) enclose the RdRp catalytic domain. The 64-residue stretch at 3145 to 3208 (GKKSRMCGYC…PPLGKGTSPL (64 aa)) folds into the AV ZBD domain. Zn(2+) is bound by residues cysteine 3151, cysteine 3154, cysteine 3164, cysteine 3169, histidine 3172, histidine 3174, histidine 3176, histidine 3178, cysteine 3185, histidine 3187, cysteine 3194, and cysteine 3197. The region spanning 3265 to 3417 (ASTALLPTCK…VFDIMPQTQL (153 aa)) is the (+)RNA virus helicase ATP-binding domain. 3293-3300 (GPPGAGKT) lines the ATP pocket. The (+)RNA virus helicase C-terminal domain occupies 3418–3546 (KTIWRFGQNI…AVHRDEQLIV (129 aa)). In terms of domain architecture, AV-Nsp11N/CoV-Nsp15M spans 3585 to 3681 (EGSSSPLPKV…LTKFVRGEAQ (97 aa)). Residues 3683–3805 (LPETVFSTGR…MVWKGKTAYF (123 aa)) form the NendoU domain. Active-site residues include histidine 3714, histidine 3729, and lysine 3758.

Belongs to the arteriviridae polyprotein family. As to quaternary structure, nsp1-alpha papain-like: Interacts with host RNF31. Interacts with host EIF2AK2; this interaction occurs in host stress granules and leads to EIF2AK2 inhibition. Interacts with host G3BP1; this interaction probably plays a role in Nsp1-beta-mediated inhibition of host EIF2AK2. In terms of assembly, interacts with host DDX18; this interaction redistributes host DDX18 to the cytoplasm. As to quaternary structure, interacts with host IFITM1. Interacts with host DDX5. In terms of assembly, interacts with host OTULIN. As to quaternary structure, interacts with host LGALS3. In terms of processing, specific enzymatic cleavages in vivo by its own proteases yield mature proteins. Nsp1 is autocleaved into two subunits, Nsp1-alpha and Nsp1-beta. There are two alternative pathways for processing. Either nsp4-5 is cleaved, which represents the major pathway or the nsp5-6 and nsp6-7 are processed, which represents the minor pathway. The major pathway occurs when nsp2 acts as a cofactor for nsp4.

It localises to the host nucleus. It is found in the host cytoplasm. The protein localises to the host membrane. The protein resides in the host endoplasmic reticulum. Its subcellular location is the host perinuclear region. The enzyme catalyses RNA(n) + a ribonucleoside 5'-triphosphate = RNA(n+1) + diphosphate. The catalysed reaction is ATP + H2O = ADP + phosphate + H(+). It carries out the reaction Thiol-dependent hydrolysis of ester, thioester, amide, peptide and isopeptide bonds formed by the C-terminal Gly of ubiquitin (a 76-residue protein attached to proteins as an intracellular targeting signal).. It catalyses the reaction uridylyl-uridylyl-ribonucleotide-RNA = a 3'-end uridylyl-2',3'-cyclophospho-uridine-RNA + a 5'-end dephospho-ribonucleoside-RNA. Contains the activities necessary for the transcription of negative stranded RNA, leader RNA, subgenomic mRNAs and progeny virion RNA as well as proteinases responsible for the cleavage of the polyprotein into functional products. Its function is as follows. Inhibits host IFN-beta production. Plays a role in the degradation of the host transcriptional activator CREBBP protein. The degradation of host CREBBP which is a key component of the IFN enhanceosome is likely responsible for the inhibition of interferon mediated by Nsp1-alpha. Also participates in the inhibition of host NF-kappa-B activation by counteracting LUBAC-dependent induction of NF-kappa-B. Reduces host NEMO ubiquitination by blocking the interaction between the two LUBAC complex components RNF31 and SHARPIN. In terms of biological role, plays a role in blocking host mRNA nuclear export to the cytoplasm and subversion of host protein synthesis. Additionally, inhibits the interferon-activated JAK/STAT signal transduction by mediating the ubiquitination and subsequent proteasomal degradation of host KPNA1. Repurposes the host antiviral stress granules into a proviral platform to counteract the EIF2AK2/PKR restriction, thereby regulating the host inflammatory response. Functionally, multifunctional protein that acts as a viral protease and as a viral antagonist of host immune response. Cleaves the nsp2/nsp3 site in the viral polyprotein. Displays deubiquitinating activity that cleaves both ubiquitinated and ISGylated products and therefore inhibits ubiquitin and ISG15-dependent host innate immunity. Also deubiquinates host NFKBIA, thereby interfering with NFKBIA degradation and impairing subsequent NF-kappa-B activation. Plays a role in the inhibition of the immune response by interacting with host IFITM1. This interaction leads to the proteasomal degradation of the IFN-induced antiviral protein IFITM1. Its function is as follows. Cleaves the majority of cleavage sites present in the C-terminus of the polyprotein. Triggers host apoptosis through caspase-3, -8, and -9 activations. Subverts host innate immune responses through its protease activity. Targets the NF-kappa-B essential modulator NEMO and mediates its cleavage. Blocks host interferon beta induction and downstream signaling by cleaving mitochondrial MAVS, dislodging it from the mitochondria. Impairs host defense by cleaving host mRNA-decapping enzyme DCP1A to attenuate its antiviral activity. In terms of biological role, plays a role in the initial induction of autophagosomes from host endoplasmic reticulum. Functionally, plays a role in the inhibition of host STAT3 signaling pathway by inducing the degradation of STAT3. Responsible for replication and transcription of the viral RNA genome. Its function is as follows. Displays RNA and DNA duplex-unwinding activities with 5' to 3' polarity. In terms of biological role, plays a role in viral transcription/replication and prevents the simultaneous activation of host cell dsRNA sensors, such as MDA5/IFIH1, OAS, PKR and NLRP3 inflammasome. Acts by degrading the 5'-polyuridines generated during replication of the poly(A) region of viral genomic and subgenomic RNAs. Catalyzes a two-step reaction in which a 2'3'-cyclic phosphate (2'3'-cP) is first generated by 2'-O transesterification, which is then hydrolyzed to a 3'-phosphate (3'-P). If not degraded, poly(U) RNA would hybridize with poly(A) RNA tails and activate host dsRNA sensors. Also plays a role in the inhibition of host type I interferon production by recruiting host OTULIN to promote removal of linear ubiquitination targeting host NEMO. This Porcine reproductive and respiratory syndrome virus (strain HB-1) (PRRSV) protein is Replicase polyprotein 1ab (rep).